A 298-amino-acid chain; its full sequence is Acetate permease A (298 aa).

The segment at 1–43 (MSAEQNHGLEKDVGGPAAPAAAAPNAPAAAPGAPPAGMSAEEH) is disordered. Positions 14-37 (GGPAAPAAAAPNAPAAAPGAPPAG) are enriched in low complexity. The next 6 membrane-spanning stretches (helical) occupy residues 86–106 (APLG…INMG), 115–135 (IVIA…GMWE), 146–166 (ALSS…PGGF), 185–205 (SFGL…FCTL), 210–230 (AFFL…VGYI), and 245–265 (AGGF…LAGI).

Belongs to the acetate uptake transporter (AceTr) (TC 2.A.96) family.

Its subcellular location is the cell membrane. The protein localises to the vacuole membrane. Functionally, high affinity monocarboxylate transporter (MCT) involved in acetate uptake. Unlike other activities involved in acetate utilization, acpA is dispensable for growth on the acetate precursor ethanol. The chain is Acetate permease A from Emericella nidulans (strain FGSC A4 / ATCC 38163 / CBS 112.46 / NRRL 194 / M139) (Aspergillus nidulans).